Reading from the N-terminus, the 212-residue chain is Large ribosomal subunit protein uL3 (212 aa).

The tract at residues 134-154 (RKTHGNSVSHRVPGSIGQNQT) is disordered. Residue Gln-153 is modified to N5-methylglutamine.

It belongs to the universal ribosomal protein uL3 family. In terms of assembly, part of the 50S ribosomal subunit. Forms a cluster with proteins L14 and L19. In terms of processing, methylated by PrmB.

Functionally, one of the primary rRNA binding proteins, it binds directly near the 3'-end of the 23S rRNA, where it nucleates assembly of the 50S subunit. The protein is Large ribosomal subunit protein uL3 of Dichelobacter nodosus (strain VCS1703A).